The chain runs to 65 residues: Large ribosomal subunit protein bL28 (65 aa).

The interval 1-21 (MPGRDQLTGQKALSGNKRSHA) is disordered.

It belongs to the bacterial ribosomal protein bL28 family.

The polypeptide is Large ribosomal subunit protein bL28 (Metamycoplasma arthritidis (strain 158L3-1) (Mycoplasma arthritidis)).